We begin with the raw amino-acid sequence, 354 residues long: Selenide, water dikinase (354 aa).

Residue Cys23 is part of the active site. Residues Lys26 and 54 to 56 (TSD) contribute to the ATP site. Asp57 contributes to the Mg(2+) binding site. Residues Asp74, Asp97, and 145–147 (GHS) each bind ATP. Asp97 is a Mg(2+) binding site. Residue Asp233 coordinates Mg(2+).

The protein belongs to the selenophosphate synthase 1 family. Class I subfamily. In terms of assembly, homodimer. The cofactor is Mg(2+).

The catalysed reaction is hydrogenselenide + ATP + H2O = selenophosphate + AMP + phosphate + 2 H(+). Its function is as follows. Synthesizes selenophosphate from selenide and ATP. The sequence is that of Selenide, water dikinase from Burkholderia orbicola (strain MC0-3).